We begin with the raw amino-acid sequence, 582 residues long: Threonine--tRNA ligase (582 aa).

The catalytic stretch occupies residues 185–478; it reads DHRKLGKELE…LTEQYGGAFP (294 aa). The Zn(2+) site is built by C278, H329, and H455.

The protein belongs to the class-II aminoacyl-tRNA synthetase family. In terms of assembly, homodimer. It depends on Zn(2+) as a cofactor.

The protein resides in the cytoplasm. It carries out the reaction tRNA(Thr) + L-threonine + ATP = L-threonyl-tRNA(Thr) + AMP + diphosphate + H(+). Catalyzes the attachment of threonine to tRNA(Thr) in a two-step reaction: L-threonine is first activated by ATP to form Thr-AMP and then transferred to the acceptor end of tRNA(Thr). Also edits incorrectly charged L-seryl-tRNA(Thr). The polypeptide is Threonine--tRNA ligase (Dehalococcoides mccartyi (strain ATCC BAA-2100 / JCM 16839 / KCTC 5957 / BAV1)).